A 293-amino-acid chain; its full sequence is Aquaporin-6 (293 aa).

At 1–22 (MEPGLCSRAYLLVGGLWTAISK) the chain is on the cytoplasmic side. The chain crosses the membrane as a helical span at residues 23–43 (ALFAEFLATGLYVFFGVGSVL). Over 44 to 51 (PWPVALPS) the chain is Extracellular. Residues 52–70 (VLQIAITFNLATATAVQIS) traverse the membrane as a helical segment. At 71-75 (WKTSG) the chain is on the cytoplasmic side. The segment at residues 76 to 85 (AHANPAVTLA) is an intramembrane region (discontinuously helical). The NPA 1 motif lies at 79-81 (NPA). Residues 86–96 (YLVGSHISLPR) are Cytoplasmic-facing. The helical transmembrane segment at 97 to 118 (AMAYIAAQLAGATAGAALLYGV) threads the bilayer. The Extracellular segment spans residues 119–138 (TPGGIRETLGVNVVHNSTST). Asn-134 is a glycosylation site (N-linked (GlcNAc...) asparagine). Residues 139–159 (GQAVAVELVLTLQLVLCVFAS) form a helical membrane-spanning segment. Over 160–165 (MDGRQT) the chain is Cytoplasmic. Residues 166–185 (LASPAAMIGTSVALGHLIGI) traverse the membrane as a helical segment. The Extracellular segment spans residues 186–189 (YFTG). The discontinuously helical intramembrane region spans 190-202 (CSMNPARSFGPAV). The NPA 2 signature appears at 193–195 (NPA). The Extracellular segment spans residues 203-210 (IVGKFAVH). A helical transmembrane segment spans residues 211–231 (WIFWVGPLTGAVLASLIYNFI). Topologically, residues 232–293 (LFPDTKTVAQ…RSFSFTLGLC (62 aa)) are cytoplasmic.

This sequence belongs to the MIP/aquaporin (TC 1.A.8) family. As to quaternary structure, homotetramer; each monomer provides an independent solute pore.

The protein localises to the cytoplasmic vesicle membrane. The enzyme catalyses nitrate(in) = nitrate(out). It catalyses the reaction iodide(out) = iodide(in). It carries out the reaction bromide(in) = bromide(out). The catalysed reaction is chloride(in) = chloride(out). The enzyme catalyses Na(+)(in) = Na(+)(out). It catalyses the reaction H2O(in) = H2O(out). It carries out the reaction CO2(out) = CO2(in). The catalysed reaction is NH4(+)(in) = NH4(+)(out). Functionally, aquaporins form homotetrameric transmembrane channels, with each monomer independently mediating water transport across the plasma membrane along its osmotic gradient. Unlike classical aquaporins, AQP6 is an intracellular channel with selective anion permeability, particularly for nitrate, and exhibits very low water permeability. It may also facilitate the transport of gases, such as CO2 and NH4(+), as demonstrated in vitro. This Mus musculus (Mouse) protein is Aquaporin-6.